Reading from the N-terminus, the 397-residue chain is Ribosomal RNA large subunit methyltransferase I (397 aa).

The 78-residue stretch at 2-79 (SASIYLVKGR…KEETVDLDFF (78 aa)) folds into the PUA domain.

This sequence belongs to the methyltransferase superfamily. RlmI family.

The protein localises to the cytoplasm. The catalysed reaction is cytidine(1962) in 23S rRNA + S-adenosyl-L-methionine = 5-methylcytidine(1962) in 23S rRNA + S-adenosyl-L-homocysteine + H(+). Its function is as follows. Specifically methylates the cytosine at position 1962 (m5C1962) of 23S rRNA. The sequence is that of Ribosomal RNA large subunit methyltransferase I from Aeromonas hydrophila subsp. hydrophila (strain ATCC 7966 / DSM 30187 / BCRC 13018 / CCUG 14551 / JCM 1027 / KCTC 2358 / NCIMB 9240 / NCTC 8049).